The chain runs to 264 residues: Membrane-spanning 4-domains subfamily A member 10 (264 aa).

At 1–57 the chain is on the cytoplasmic side; sequence MKAEATVIPSRCARGQTTAAPGVQPWQTSVPQNTTQPKLLAPRQHEKSQKRSSLLKE. Positions 17 to 37 are enriched in polar residues; the sequence is TTAAPGVQPWQTSVPQNTTQP. The segment at 17 to 48 is disordered; sequence TTAAPGVQPWQTSVPQNTTQPKLLAPRQHEKS. The helical transmembrane segment at 58–78 threads the bilayer; sequence LGAFHITIALLHLVFGGYLAS. Over 79-89 the chain is Extracellular; the sequence is TVKSLHLVVLK. Residues 90–110 form a helical membrane-spanning segment; sequence SWYPFWGAASFLISGILAITM. The Cytoplasmic portion of the chain corresponds to 111–119; sequence KTFSKTYLK. Residues 120 to 140 traverse the membrane as a helical segment; that stretch reads MLCLMTNLVSLFCVLSGLFVI. Over 141–169 the chain is Extracellular; the sequence is SKDLFLESPFESPIWRMYPNSTVHIQRLE. The chain crosses the membrane as a helical span at residues 170-190; the sequence is LALLCFTVLELFLPVPTAVTA. Over 191–264 the chain is Cytoplasmic; that stretch reads WRDRPSAKND…GAGIWTQTAN (74 aa).

Belongs to the MS4A family.

The protein resides in the membrane. Functionally, may be involved in signal transduction as a component of a multimeric receptor complex. This chain is Membrane-spanning 4-domains subfamily A member 10 (MS4A10), found in Pongo abelii (Sumatran orangutan).